Here is a 236-residue protein sequence, read N- to C-terminus: Phosphoribosylaminoimidazole-succinocarboxamide synthase (236 aa).

It belongs to the SAICAR synthetase family.

It catalyses the reaction 5-amino-1-(5-phospho-D-ribosyl)imidazole-4-carboxylate + L-aspartate + ATP = (2S)-2-[5-amino-1-(5-phospho-beta-D-ribosyl)imidazole-4-carboxamido]succinate + ADP + phosphate + 2 H(+). Its pathway is purine metabolism; IMP biosynthesis via de novo pathway; 5-amino-1-(5-phospho-D-ribosyl)imidazole-4-carboxamide from 5-amino-1-(5-phospho-D-ribosyl)imidazole-4-carboxylate: step 1/2. The sequence is that of Phosphoribosylaminoimidazole-succinocarboxamide synthase from Pelodictyon phaeoclathratiforme (strain DSM 5477 / BU-1).